A 712-amino-acid chain; its full sequence is Voltage-gated chloride channel TMC4 (712 aa).

The tract at residues 1–39 is disordered; the sequence is MEENPTLESEAWGSSRGWLAPREARGAPCSSPGPSLSSV. Topologically, residues 1–168 are extracellular; sequence MEENPTLESE…GTESYFSLLR (168 aa). N107 carries an N-linked (GlcNAc...) asparagine glycan. The chain crosses the membrane as a helical span at residues 169–189; sequence FLLLLNVLASVLMACMTLLPT. At 190-249 the chain is on the cytoplasmic side; that stretch reads WLGGAPPGPPGPDISSPCGSYNPHSQGLVTFATQLFNLLSGEGYLEWSPLFYGFYPPRPR. The helical transmembrane segment at 250 to 270 threads the bilayer; it reads LAVTYLCWAFAVGLICLLLIL. The Extracellular segment spans residues 271-348; sequence HRSVSGLKQT…GQQARVWLVR (78 aa). Residues 349-369 form a helical membrane-spanning segment; it reads VLLNLLVVALLGAAFYGVYWA. Residues 370–394 lie on the Cytoplasmic side of the membrane; that stretch reads TGCTVELQEMPLVQELPLLKLGVNY. The helical transmembrane segment at 395-415 threads the bilayer; sequence LPSIFIAGVNFVLPPVFKLIA. Residues 416 to 425 are Extracellular-facing; it reads PLEGYTRSRQ. Residues 426-446 form a helical membrane-spanning segment; that stretch reads IVFILLRTVFLRLASLVVLLF. At 447–483 the chain is on the cytoplasmic side; sequence SLWNQITCGGDSEAEDCKTCGYNYKQLPCWETVLGQE. The helical transmembrane segment at 484-504 threads the bilayer; the sequence is MYKLLLFDLLTVLAVALLIQF. The Extracellular portion of the chain corresponds to 505–542; that stretch reads PRKLLCGLCPGALGRLAGTQEFQVPDEVLGLIYAQTVV. A helical transmembrane segment spans residues 543–565; sequence WVGSFFCPLLPLLNTVKFLLLFY. Topologically, residues 566–592 are cytoplasmic; it reads LKKLTLFSTCSPAARTFRASAANFFFP. A helical membrane pass occupies residues 593-613; sequence LVLLLGLAISSVPLLYSIFLI. The Extracellular portion of the chain corresponds to 614 to 654; the sequence is PPSKLCGPFRGQSSIWAQIPESISSLPETTQNFLFFLGTQA. Residues 655 to 677 form a helical membrane-spanning segment; that stretch reads FAVPLLLISSILMAYTVALANSY. The Cytoplasmic segment spans residues 678 to 712; it reads GRLISELKRQRQTEAQNKVFLARRAVALTSTKPAL.

It belongs to the TMC family.

The protein resides in the membrane. It carries out the reaction chloride(in) = chloride(out). In terms of biological role, voltage-gated chloride channel involved in high-concentration salt taste sensation. Depolarization induced by high NaCl concentration may trigger the activation of TMC4-mediated chloride influx into taste bud cells, helping the return to resting potential. Also allows permeation of organic anions including gluconate, but their current amplitudes at positive potentials are less than that of chloride. Involved in pH and temperature-dependent modulation of salty taste. This Homo sapiens (Human) protein is Voltage-gated chloride channel TMC4.